A 358-amino-acid chain; its full sequence is MLDERMIRIVVAFIVSLLTVLIITPIVKRIAIKIGAVDQPSNRKVHDKIMPRMGGLAIFIGVVAGVLASGIYTETRMTAITVGAFIIIVLGILDDKYQLSAKVKFLIQLGVAIMIVSTGLKMDFFSVPFLTERFELGWMAYPLTVLWIVGITNAINLIDGLDGLAAGLSVIGLSTIAVMALSGGKVLILSLSLVVIASTLGFLFYNFHPAKIFMGDTGSLFLGYSISILSLLGLYKSVTLFSIVIPIIILGVPIFDTTFAIIRRILNKQPISAPDKSHIHHRLMAFGLSHRMSVLVIYLIGFIFSISAIVLKSATIWLSLFIIFILIIFMQIIAEVTGLVNEKFKPFTKFYKRLVKRN.

Helical transmembrane passes span 10 to 32 (VVAF…RIAI), 53 to 72 (MGGL…SGIY), 76 to 93 (RMTA…LGIL), 105 to 127 (FLIQ…FFSV), 137 to 157 (GWMA…AINL), 164 to 181 (LAAG…VMAL), 186 to 205 (VLIL…FLFY), 218 to 235 (GSLF…LGLY), 240 to 262 (LFSI…FAII), 292 to 311 (MSVL…AIVL), and 316 to 338 (IWLS…EVTG).

It belongs to the glycosyltransferase 4 family. Mg(2+) serves as cofactor. It depends on Mn(2+) as a cofactor.

It localises to the cell membrane. It catalyses the reaction di-trans,octa-cis-undecaprenyl phosphate + UDP-N-acetyl-alpha-D-glucosamine = N-acetyl-alpha-D-glucosaminyl-di-trans,octa-cis-undecaprenyl diphosphate + UMP. It participates in cell wall biogenesis; poly(glucopyranosyl N-acetylgalactosamine 1-phosphate) teichoic acid biosynthesis. Its pathway is cell wall biogenesis; poly(glycerol phosphate) teichoic acid biosynthesis. In terms of biological role, catalyzes the formation of undecaprenyl-PP-N-acetylglucosamine. Involved in the synthesis of anionic cell-wall polymers as it mediates the initiation of the linkage unit formation that appears to be common to the two types of teichoic acids attached to the peptidoglycan of B.subtilis; may also be involved in teichuronic acid biosynthesis. In Bacillus subtilis (strain 168), this protein is Probable undecaprenyl-phosphate N-acetylglucosaminyl 1-phosphate transferase (tagO).